Consider the following 385-residue polypeptide: Cytochrome b (385 aa).

Residues 1-27 are Mitochondrial matrix-facing; sequence MRLLKSHPLLKLVNSYLIDASQPSNIS. Tyrosine 16 provides a ligand contact to a ubiquinone. Residues 28 to 51 form a helical membrane-spanning segment; sequence YLWNFGSLLACCLIIQIVTGVTLA. Residues 52–74 lie on the Mitochondrial intermembrane side of the membrane; sequence MHYSPNVLEAFNSIEHIMRDVNN. A helical membrane pass occupies residues 75 to 102; sequence GWLVRYLHSNTASAFFFLVYLHIGRGMY. The heme b site is built by histidine 82 and histidine 96. At 103-110 the chain is on the mitochondrial matrix side; that stretch reads YGSYRAPR. The helical transmembrane segment at 111–135 threads the bilayer; the sequence is TLVWAIGTVILILMMATAFLGYVLP. The Mitochondrial intermembrane portion of the chain corresponds to 136 to 172; that stretch reads YGQMSLWGATVITNLISAIPWIGQDIVEFIWGGFSVN. Residues 173 to 205 traverse the membrane as a helical segment; it reads NATLNRFFALHFVLPFILAALVLMHLIALHDTA. Heme b is bound by residues histidine 183 and histidine 197. A ubiquinone is bound at residue histidine 202. Topologically, residues 206–224 are mitochondrial matrix; the sequence is GSSNPLGVSGNYDRITFAP. Residues 225-247 form a helical membrane-spanning segment; that stretch reads YYLFKDLITIFIFIYVLSSFVFF. Residues 248–288 are Mitochondrial intermembrane-facing; it reads MPNVLGDSENYIMANPMQTPPAIVPEWYLLPFYAILRSIPN. The chain crosses the membrane as a helical span at residues 289–309; that stretch reads KLLGVIAMFSAILAIMLLPIT. The Mitochondrial matrix segment spans residues 310–320; the sequence is DLGRSKGLQFR. The chain crosses the membrane as a helical span at residues 321 to 341; the sequence is PLSKFAFWAFVVNFLILMKLG. Topologically, residues 342 to 348 are mitochondrial intermembrane; that stretch reads ACHVESP. The chain crosses the membrane as a helical span at residues 349–365; it reads FIELGQFSTIFYFSYFI. Over 366-385 the chain is Mitochondrial matrix; sequence FIVPVLSLIENTLVDLNYLK.

It belongs to the cytochrome b family. Component of the ubiquinol-cytochrome c oxidoreductase (cytochrome b-c1 complex, complex III, CIII), a multisubunit enzyme composed of 10 subunits. The complex is composed of 3 respiratory subunits cytochrome b (cob), cytochrome c1 (cyt-1) and Rieske protein (fes-1), 2 core protein subunits pep and ucr-1, and 5 low-molecular weight protein subunits qcr6, qcr7, qcr8, qcr9 and probably NCU16844/qcr10. The complex exists as an obligatory dimer and forms supercomplexes (SCs) in the inner mitochondrial membrane with NADH-ubiquinone oxidoreductase (complex I, CI) and cytochrome c oxidase (complex IV, CIV), resulting in different assemblies (supercomplexes SCI(1)III(2), SCIII(2)IV(1) and SCIII(2)IV(2) as well as higher order I(x)III(y)IV(z) megacomplexes). The cofactor is heme b.

It is found in the mitochondrion inner membrane. It carries out the reaction a quinol + 2 Fe(III)-[cytochrome c](out) = a quinone + 2 Fe(II)-[cytochrome c](out) + 2 H(+)(out). Its function is as follows. Component of the ubiquinol-cytochrome c oxidoreductase, a multisubunit transmembrane complex that is part of the mitochondrial electron transport chain which drives oxidative phosphorylation. The respiratory chain contains 3 multisubunit complexes succinate dehydrogenase (complex II, CII), ubiquinol-cytochrome c oxidoreductase (cytochrome b-c1 complex, complex III, CIII) and cytochrome c oxidase (complex IV, CIV), that cooperate to transfer electrons derived from NADH and succinate to molecular oxygen, creating an electrochemical gradient over the inner membrane that drives transmembrane transport and the ATP synthase. The cytochrome b-c1 complex catalyzes electron transfer from ubiquinol to cytochrome c, linking this redox reaction to translocation of protons across the mitochondrial inner membrane, with protons being carried across the membrane as hydrogens on the quinol. In the process called Q cycle, 2 protons are consumed from the matrix, 4 protons are released into the intermembrane space and 2 electrons are passed to cytochrome c. Cytochrome b is a catalytic core subunit containing 2 b-type hemes BL and BH topographically segregated in the quinone reduction (Qi) and quinol oxidation (Q0) sites on opposite sides of the membrane. This chain is Cytochrome b (cob), found in Neurospora crassa (strain ATCC 24698 / 74-OR23-1A / CBS 708.71 / DSM 1257 / FGSC 987).